Here is a 591-residue protein sequence, read N- to C-terminus: Formate--tetrahydrofolate ligase (591 aa).

74-81 (TPLGEGKS) contacts ATP.

The protein belongs to the formate--tetrahydrofolate ligase family.

The catalysed reaction is (6S)-5,6,7,8-tetrahydrofolate + formate + ATP = (6R)-10-formyltetrahydrofolate + ADP + phosphate. Its pathway is one-carbon metabolism; tetrahydrofolate interconversion. This is Formate--tetrahydrofolate ligase from Desulforapulum autotrophicum (strain ATCC 43914 / DSM 3382 / VKM B-1955 / HRM2) (Desulfobacterium autotrophicum).